The following is a 1097-amino-acid chain: Apolipoprotein B receptor (1097 aa).

Disordered regions lie at residues 64 to 249 (QEDL…KGEE), 262 to 376 (AWGT…WTTS), 410 to 739 (EEEG…SRRG), 789 to 866 (GWDS…ARAE), and 889 to 1097 (VGWQ…PKPQ). 3 stretches are compositionally biased toward basic and acidic residues: residues 83–92 (GPGDDRRHEV), 158–177 (ERQE…RSWE), and 185–208 (VRAR…ETEG). A compositionally biased stretch (low complexity) spans 209 to 218 (KAGAVGPKAA). Basic and acidic residues-rich tracts occupy residues 219 to 232 (GDNR…READ) and 279 to 302 (GREE…EEAR). Positions 312–330 (TASGGEEAETASGGEEAGT) are enriched in low complexity. Residues 331–362 (ASGGEEAGIASGGEAGTASGGEEAGTASGGEE) show a composition bias toward gly residues. Position 458 is a phosphoserine (Ser458). 2 stretches are compositionally biased toward basic and acidic residues: residues 463–487 (VDLR…RMEE) and 496–505 (EERGSSRDPV). Residue Ser510 is modified to Phosphoserine. Thr572 is modified (phosphothreonine). Phosphoserine is present on Ser594. Composition is skewed to basic and acidic residues over residues 594 to 606 (SKEE…EAGP) and 626 to 637 (NRTRKDMERGNT). Acidic residues predominate over residues 640–652 (DAADGEQREEEET). Composition is skewed to basic and acidic residues over residues 791-800 (DSKEKEEAAA), 892-918 (QERE…RLLD), and 928-950 (RRAE…EEQP). A compositionally biased stretch (basic residues) spans 1000–1017 (SRVHLSRSSSQRRSRPSF). Residues 1041-1050 (APEQRPLQLE) are compositionally biased toward low complexity.

In terms of assembly, homodimer. In terms of processing, there are 2 forms in macrophages, the membrane-binding proteins 200 kDa (MBP 200) and 235 kDa (MBP 235), that can be reduced into a single active ligand-binding species with intermediate mobility (MBP 200R). As to expression, expressed in peripheral blood leukocytes &gt; bone marrow = spleen &gt; lymph node, and only faintly visible in appendix and thymus. Expressed in the brain, heart, kidney, liver, lung, pancreas, and placenta. Expressed primarily by reticuloendothelial cells: monocytes, macrophages, and endothelial cells. Expressed in atherosclerotic lesion foam cells.

It localises to the cell membrane. In terms of biological role, macrophage receptor that binds to the apolipoprotein B48 (APOB) of dietary triglyceride (TG)-rich lipoproteins (TRL) or to a like domain of APOB in hypertriglyceridemic very low density lipoprotein (HTG-VLDL). Binds and internalizes TRL when out of the context of the macrophage. May provide essential lipids to reticuloendothelial cells. Could also be involved in foam cell formation with elevated TRL and remnant lipoprotein (RLP). Mediates the rapid high-affinity uptake of chylomicrons (CM), HTG-VLDL, and trypsinized (tryp) VLDL devoid of APOE in vitro in macrophages. The polypeptide is Apolipoprotein B receptor (Homo sapiens (Human)).